Here is a 207-residue protein sequence, read N- to C-terminus: Ribonuclease HII (207 aa).

The RNase H type-2 domain occupies 18–207; the sequence is GLVAGVDEAG…VAEVLREALP (190 aa). 3 residues coordinate a divalent metal cation: Asp24, Glu25, and Asp116.

This sequence belongs to the RNase HII family. Mn(2+) serves as cofactor. Mg(2+) is required as a cofactor.

It localises to the cytoplasm. The enzyme catalyses Endonucleolytic cleavage to 5'-phosphomonoester.. Its function is as follows. Endonuclease that specifically degrades the RNA of RNA-DNA hybrids. The chain is Ribonuclease HII from Albidiferax ferrireducens (strain ATCC BAA-621 / DSM 15236 / T118) (Rhodoferax ferrireducens).